A 487-amino-acid chain; its full sequence is Glutamate--tRNA ligase (487 aa).

Residues 10–20 (PSPTGYMHVGN) carry the 'HIGH' region motif. The short motif at 251 to 255 (KLSKR) is the 'KMSKS' region element. Position 254 (Lys-254) interacts with ATP.

Belongs to the class-I aminoacyl-tRNA synthetase family. Glutamate--tRNA ligase type 1 subfamily. Monomer.

The protein resides in the cytoplasm. It carries out the reaction tRNA(Glu) + L-glutamate + ATP = L-glutamyl-tRNA(Glu) + AMP + diphosphate. In terms of biological role, catalyzes the attachment of glutamate to tRNA(Glu) in a two-step reaction: glutamate is first activated by ATP to form Glu-AMP and then transferred to the acceptor end of tRNA(Glu). This is Glutamate--tRNA ligase from Clostridium kluyveri (strain ATCC 8527 / DSM 555 / NBRC 12016 / NCIMB 10680 / K1).